We begin with the raw amino-acid sequence, 421 residues long: C2H2 type master regulator of conidiophore development brlA (421 aa).

C2H2-type zinc fingers lie at residues 309–333 (FKCKEPGCKGRFKRQEHLKRHMKSH) and 339–364 (HVCWVPGCERAFSRSDNLNAHYTKTH). Residues 379–421 (ESSPDYDPDFRGQLTPDGLPIRGSTLDDPMPNSREYSVDGLDD) form a disordered region.

It is found in the nucleus. In terms of biological role, brlA, abaA and wetA are pivotal regulators of conidiophore development and conidium maturation. They act individually and together to regulate their own expression and that of numerous other sporulation-specific genes. Binds promoters of target genes at brlA response elements (BREs) containing the conserved sequence 5'-(C/A)(A/G)AGGG(G/A)-3'. Required for conidiophores formation. Controls expression of abaA. This chain is C2H2 type master regulator of conidiophore development brlA, found in Aspergillus oryzae (strain ATCC 42149 / RIB 40) (Yellow koji mold).